The sequence spans 578 residues: Probable lysosomal cobalamin transporter (578 aa).

2 helical membrane passes run 8–28 (LIWVVYAIAIAVLIAVASVFI) and 46–66 (IFAITTLLATVLLLPVDVALV). Asn-70 is a glycosylation site (N-linked (GlcNAc...) asparagine). Transmembrane regions (helical) follow at residues 95–115 (VVYYLLYSLDALLCLLVIPFT) and 145–165 (TITFIAIVIVLFLVGFFVPVA). Asn-168 carries N-linked (GlcNAc...) asparagine glycosylation. The next 6 membrane-spanning stretches (helical) occupy residues 188-208 (ALTFALGLLITIGLCLYVLYT), 312-332 (LLGGIILLIIALVIWVSMLLT), 347-367 (GYILGHITVFNPINWVFVQAA), 375-395 (VIFTLLVLLFFCSSVVGIAIV), 419-439 (LTTAMLMLTILALNYSVSMVV), and 506-526 (FFGVIFFWGQFVFLGVYLIVV). The disordered stretch occupies residues 539–578 (RQMDEDAEEAEEEGLLASTGRRLDTAWQDITGRSNRQRDS). The segment covering 540 to 552 (QMDEDAEEAEEEG) has biased composition (acidic residues).

This sequence belongs to the LIMR family. LMBRD1 subfamily.

It localises to the lysosome membrane. Its function is as follows. Probable lysosomal cobalamin transporter. Required to export cobalamin from lysosomes allowing its conversion to cofactors. This is Probable lysosomal cobalamin transporter from Aspergillus terreus (strain NIH 2624 / FGSC A1156).